The primary structure comprises 149 residues: uncharacterized protein (149 aa).

Helical transmembrane passes span 39-61, 82-104, and 119-141; these read VPLGTLVFLFVVIITLIPLLIIG, VFGYSLIVSDIVGFAIVFFGAIL, and WMMMLGSLIALGTTANLVSSIYL.

This sequence to M.pneumoniae MPN_090.

The protein localises to the cell membrane. This is an uncharacterized protein from Mycoplasma pneumoniae (strain ATCC 29342 / M129 / Subtype 1) (Mycoplasmoides pneumoniae).